The primary structure comprises 444 residues: uncharacterized protein (444 aa).

12 consecutive transmembrane segments (helical) span residues 2–22 (PILIVAVGVLILLFLIIKVKL), 24–44 (TFVSLIVVSFLVAIGLGMDIN), 52–72 (TGIGGQLGHLALVFGLGAMLG), 106–126 (FIIGIALFFEVGLVLLIPIVY), 134–154 (MPFLYLGIPMAAALNVTHGFL), 174–194 (VLLFGIIIAVPTTVIAGPLFN), 228–248 (FAISAVTSLFPVIFMAMATIF), 261–281 (IIEFIGTPGTAMLISLLLALY), 305–325 (IAMMLLIIGGGGAFKQVLIDG), 343–363 (LFVAWTIAAVLRLCLGSATVA), 377–397 (AGSVNPALMVLATGAGSVIAC), and 424–444 (LLTTVLSVTGLGCVLLAGLVM).

This sequence belongs to the GntP permease family.

It is found in the cell membrane. This is an uncharacterized protein from Bacillus subtilis (strain 168).